We begin with the raw amino-acid sequence, 785 residues long: Pre-rRNA-processing protein TSR1 homolog (785 aa).

A disordered region spans residues 1–59 (MSTTGHRAGVFKKPSKPHKSWKGKRTKGEITSENRGREGVKQLTRSAHSTHRTISKDAR). The span at 9–25 (GVFKKPSKPHKSWKGKR) shows a compositional bias: basic residues. The span at 26–40 (TKGEITSENRGREGV) shows a compositional bias: basic and acidic residues. In terms of domain architecture, Bms1-type G spans 83-243 (APCLVTVVSL…LRILNETKKK (161 aa)). The interval 307–426 (PHPLKAHNKT…GETTASEMMF (120 aa)) is disordered. Over residues 376 to 409 (LDDEDDEDEEDSDEDMDDSDNEEVEDDSEEEEPM) the composition is skewed to acidic residues.

Belongs to the TRAFAC class translation factor GTPase superfamily. Bms1-like GTPase family. TSR1 subfamily.

Its subcellular location is the nucleus. The protein resides in the nucleolus. Required during maturation of the 40S ribosomal subunit in the nucleolus. This Caenorhabditis elegans protein is Pre-rRNA-processing protein TSR1 homolog (tag-151).